We begin with the raw amino-acid sequence, 383 residues long: Acetylornithine deacetylase (383 aa).

Zn(2+) is bound at residue His80. The active site involves Asp82. Asp112 provides a ligand contact to Zn(2+). Glu144 is an active-site residue. Residues Glu145, Glu169, and His355 each contribute to the Zn(2+) site.

Belongs to the peptidase M20A family. ArgE subfamily. As to quaternary structure, homodimer. The cofactor is Zn(2+). Requires Co(2+) as cofactor. Glutathione is required as a cofactor.

The protein resides in the cytoplasm. The catalysed reaction is N(2)-acetyl-L-ornithine + H2O = L-ornithine + acetate. It participates in amino-acid biosynthesis; L-arginine biosynthesis; L-ornithine from N(2)-acetyl-L-ornithine (linear): step 1/1. Functionally, catalyzes the hydrolysis of the amide bond of N(2)-acetylated L-amino acids. Cleaves the acetyl group from N-acetyl-L-ornithine to form L-ornithine, an intermediate in L-arginine biosynthesis pathway, and a branchpoint in the synthesis of polyamines. This Erwinia tasmaniensis (strain DSM 17950 / CFBP 7177 / CIP 109463 / NCPPB 4357 / Et1/99) protein is Acetylornithine deacetylase.